The primary structure comprises 160 residues: Methyl-coenzyme M reductase operon protein D (160 aa).

MCR is composed of three subunits: alpha, beta, and gamma. The function of proteins C and D is not known.

This is Methyl-coenzyme M reductase operon protein D (mcrD) from Methanococcus vannielii.